Here is a 288-residue protein sequence, read N- to C-terminus: Sulfur carrier protein FdhD (288 aa).

C122 functions as the Cysteine persulfide intermediate in the catalytic mechanism. F268–R273 contacts Mo-bis(molybdopterin guanine dinucleotide).

Belongs to the FdhD family.

The protein localises to the cytoplasm. In terms of biological role, required for formate dehydrogenase (FDH) activity. Acts as a sulfur carrier protein that transfers sulfur from IscS to the molybdenum cofactor prior to its insertion into FDH. This Anaeromyxobacter dehalogenans (strain 2CP-1 / ATCC BAA-258) protein is Sulfur carrier protein FdhD.